The primary structure comprises 879 residues: Protein P (879 aa).

Residues 1–184 (MHPFSRLFRN…GKPYSWEHRQ (184 aa)) form a terminal protein domain (TP) region. Residues 185 to 382 (LVQHNGQQHK…YCIHHIVSSI (198 aa)) form a spacer region. Residues 304–345 (SASNSNKSRSREKAYSSNSTSKRYSPPLNYEKSDFSSPGVRG) are disordered. Residues 383–724 (DDWGPCTVTG…YEELWPVVRQ (342 aa)) form a polymerase/reverse transcriptase domain (RT) region. The region spanning 393-634 (DVTIKSPRTP…NHLHFMGYVI (242 aa)) is the Reverse transcriptase domain. Aspartate 465, aspartate 585, and aspartate 586 together coordinate Mg(2+).

Belongs to the hepadnaviridae P protein family.

The enzyme catalyses DNA(n) + a 2'-deoxyribonucleoside 5'-triphosphate = DNA(n+1) + diphosphate. It carries out the reaction Endonucleolytic cleavage to 5'-phosphomonoester.. Its activity is regulated as follows. Activated by host HSP70 and HSP40 in vitro to be able to bind the epsilon loop of the pgRNA. Because deletion of the RNase H region renders the protein partly chaperone-independent, the chaperones may be needed indirectly to relieve occlusion of the RNA-binding site by this domain. Inhibited by several reverse-transcriptase inhibitors: Lamivudine, Adefovir and Entecavir. Its function is as follows. Multifunctional enzyme that converts the viral RNA genome into dsDNA in viral cytoplasmic capsids. This enzyme displays a DNA polymerase activity that can copy either DNA or RNA templates, and a ribonuclease H (RNase H) activity that cleaves the RNA strand of RNA-DNA heteroduplexes in a partially processive 3'- to 5'-endonucleasic mode. Neo-synthesized pregenomic RNA (pgRNA) are encapsidated together with the P protein, and reverse-transcribed inside the nucleocapsid. Initiation of reverse-transcription occurs first by binding the epsilon loop on the pgRNA genome, and is initiated by protein priming, thereby the 5'-end of (-)DNA is covalently linked to P protein. Partial (+)DNA is synthesized from the (-)DNA template and generates the relaxed circular DNA (RC-DNA) genome. After budding and infection, the RC-DNA migrates in the nucleus, and is converted into a plasmid-like covalently closed circular DNA (cccDNA). The activity of P protein does not seem to be necessary for cccDNA generation, and is presumably released from (+)DNA by host nuclear DNA repair machinery. The protein is Protein P of Woodchuck hepatitis B virus (isolate 1) (WHV).